The chain runs to 144 residues: Large ribosomal subunit protein uL15 (144 aa).

Positions 1 to 48 are disordered; sequence MIKLESLQDPSPRKRRTKLLGRGPSSGHGKTSCRGHKGDGSRSGYKRR.

The protein belongs to the universal ribosomal protein uL15 family. Part of the 50S ribosomal subunit.

In terms of biological role, binds to the 23S rRNA. This is Large ribosomal subunit protein uL15 from Chlamydia caviae (strain ATCC VR-813 / DSM 19441 / 03DC25 / GPIC) (Chlamydophila caviae).